The chain runs to 43 residues: Alpha-conotoxin-like Leo-A1 (43 aa).

Residues 1-26 constitute a propeptide that is removed on maturation; it reads LTLDRASDDTDVAAEIMSGLIALAID. Disulfide bonds link Cys-28–Cys-34 and Cys-29–Cys-42. Positions 30 to 32 are lacks the Ser-Xaa-Pro motif that is crucial for potent interaction with nAChR; that stretch reads SDS.

The protein belongs to the conotoxin A superfamily. As to expression, expressed by the venom duct.

It is found in the secreted. Functionally, alpha-conotoxins act on postsynaptic membranes, they bind to the nicotinic acetylcholine receptors (nAChR) and thus inhibit them. Has possibly a distinct nAChR binding mode from other alpha-conotoxins, due to a different three residue motif (lacks the Ser-Xaa-Pro motif). The sequence is that of Alpha-conotoxin-like Leo-A1 from Conus leopardus (Leopard cone).